We begin with the raw amino-acid sequence, 879 residues long: Alanine--tRNA ligase (879 aa).

Histidine 567, histidine 571, cysteine 669, and histidine 673 together coordinate Zn(2+).

The protein belongs to the class-II aminoacyl-tRNA synthetase family. Zn(2+) is required as a cofactor.

The protein localises to the cytoplasm. The enzyme catalyses tRNA(Ala) + L-alanine + ATP = L-alanyl-tRNA(Ala) + AMP + diphosphate. Its function is as follows. Catalyzes the attachment of alanine to tRNA(Ala) in a two-step reaction: alanine is first activated by ATP to form Ala-AMP and then transferred to the acceptor end of tRNA(Ala). Also edits incorrectly charged Ser-tRNA(Ala) and Gly-tRNA(Ala) via its editing domain. In Levilactobacillus brevis (strain ATCC 367 / BCRC 12310 / CIP 105137 / JCM 1170 / LMG 11437 / NCIMB 947 / NCTC 947) (Lactobacillus brevis), this protein is Alanine--tRNA ligase.